The following is a 483-amino-acid chain: UDP-N-acetylmuramate--L-alanine ligase (483 aa).

Residue 125–131 (GTHGKTT) participates in ATP binding.

The protein belongs to the MurCDEF family.

It localises to the cytoplasm. The catalysed reaction is UDP-N-acetyl-alpha-D-muramate + L-alanine + ATP = UDP-N-acetyl-alpha-D-muramoyl-L-alanine + ADP + phosphate + H(+). The protein operates within cell wall biogenesis; peptidoglycan biosynthesis. Cell wall formation. The protein is UDP-N-acetylmuramate--L-alanine ligase of Pseudoalteromonas translucida (strain TAC 125).